A 930-amino-acid polypeptide reads, in one-letter code: Protocadherin gamma-B6 (930 aa).

The signal sequence occupies residues 1 to 30 (MGGSCAQRRRAGPRQVLFPLLLPFFYPTLC). Cadherin domains are found at residues 31-133 (EPIR…APQF), 134-242 (DKKE…PPVF), 243-347 (SRDE…SPEI), 348-452 (IITS…APVF), 453-562 (DQTS…APRV), and 570-675 (DGSA…LPDL). Residues 31 to 691 (EPIRYSIPEE…SDPQAELQFY (661 aa)) lie on the Extracellular side of the membrane. N-linked (GlcNAc...) asparagine glycans are attached at residues asparagine 304, asparagine 419, and asparagine 545. Residues 692–712 (LVVALALISVLFLLAVILAIA) form a helical membrane-spanning segment. At 713–930 (LRLRRSLSPT…KKKSGKKEKK (218 aa)) the chain is on the cytoplasmic side. Disordered stretches follow at residues 791–839 (PHGG…WPNN) and 900–930 (ATLTNAAGKRDGKAPAGGNGNKKKSGKKEKK). A compositionally biased stretch (polar residues) spans 800-839 (HPETLTSQAPPNTDWRFSQAQRPGTSGSQNGDDTGTWPNN). Over residues 920–930 (NKKKSGKKEKK) the composition is skewed to basic residues.

It localises to the cell membrane. Its function is as follows. Potential calcium-dependent cell-adhesion protein. May be involved in the establishment and maintenance of specific neuronal connections in the brain. This chain is Protocadherin gamma-B6 (PCDHGB6), found in Pan troglodytes (Chimpanzee).